The primary structure comprises 792 residues: Starch synthase 2, chloroplastic/amyloplastic (792 aa).

The transit peptide at 1–55 (MASVAESSFPLLCQIKTQRRINSSTLRHSRVSYHDLPSGSLSFRSRSFVLGHRCK) directs the protein to the chloroplast. The tract at residues 105-295 (IKESTPDLDD…GKDEEKPPPL (191 aa)) is disordered. Positions 145-156 (GSVSPSTYGKSS) are enriched in polar residues. Low complexity predominate over residues 179–192 (SSASVISSSPVTSP). The span at 221–233 (SVMTSPEKTSDPV) shows a compositional bias: polar residues. Over residues 266-275 (KTEKYVEKTP) the composition is skewed to basic and acidic residues. Lys315 contacts ADP-alpha-D-glucose.

The protein belongs to the glycosyltransferase 1 family. Bacterial/plant glycogen synthase subfamily. Expressed in roots, leaves and flowers.

The protein resides in the plastid. It is found in the chloroplast. It localises to the amyloplast. It carries out the reaction [(1-&gt;4)-alpha-D-glucosyl](n) + ADP-alpha-D-glucose = [(1-&gt;4)-alpha-D-glucosyl](n+1) + ADP + H(+). It functions in the pathway glycan biosynthesis; starch biosynthesis. Involved in the synthesis of glycan chains within amylopectin in leaves. Is required to produce chains with a degree of polymerization of 12 to 25 (DP12-DP25). The chain is Starch synthase 2, chloroplastic/amyloplastic (SS2) from Arabidopsis thaliana (Mouse-ear cress).